The chain runs to 225 residues: 2-amino-5-formylamino-6-ribosylaminopyrimidin-4(3H)-one 5'-monophosphate deformylase (225 aa).

Residues Glu-28, His-30, Asp-39, and His-107 each coordinate Fe cation.

The protein belongs to the creatininase superfamily. FAPy deformylase family. Homodimer. Fe(2+) serves as cofactor. The cofactor is Zn(2+).

It carries out the reaction 2-amino-5-formylamino-6-(5-phospho-D-ribosylamino)pyrimidin-4(3H)-one + H2O = 2,5-diamino-6-(1-D-ribosylamino)pyrimidin-4(3H)-one 5'-phosphate + formate + H(+). Its pathway is cofactor biosynthesis; coenzyme F420 biosynthesis. It participates in cofactor biosynthesis; riboflavin biosynthesis. Catalyzes the hydrolysis of the formamide of 2-amino-5-formylamino-6-ribosylamino-4(3H)-pyrimidinone 5'-monophosphate (FAPy) to form 2,5-diamino-6-ribosylamino-4(3H)-pyrimidinone 5'-phosphate (APy). The protein is 2-amino-5-formylamino-6-ribosylaminopyrimidin-4(3H)-one 5'-monophosphate deformylase of Methanocaldococcus sp. (strain FS406-22).